Reading from the N-terminus, the 87-residue chain is Stannin (87 aa).

Topologically, residues 1-10 (MSIMDHSPTT) are mitochondrial intermembrane. The chain crosses the membrane as a helical span at residues 11–31 (GVVTVIVILIAIAALGALILG). Over 32-87 (CWCYLRLQRISQSEDEESIVGDGETKEPFLLVQYSAKGPCVERKAKLTPNGPEVHS) the chain is Cytoplasmic. S49 carries the post-translational modification Phosphoserine.

Belongs to the stannin family. As to quaternary structure, monomer.

Its subcellular location is the mitochondrion outer membrane. Plays a role in the toxic effects of organotins. Plays a role in endosomal maturation. The protein is Stannin (SNN) of Bos taurus (Bovine).